We begin with the raw amino-acid sequence, 370 residues long: GTPase Obg (370 aa).

Residues Met1 to Leu159 form the Obg domain. Positions Asn127–Pro146 are disordered. Positions Ala160 to Ala334 constitute an OBG-type G domain. GTP-binding positions include Gly166 to Ser173, Phe191 to Ala195, Asp213 to Gly216, Asn284 to Asp287, and Ser315 to Leu317. Mg(2+)-binding residues include Ser173 and Thr193.

Belongs to the TRAFAC class OBG-HflX-like GTPase superfamily. OBG GTPase family. In terms of assembly, monomer. The cofactor is Mg(2+).

It localises to the cytoplasm. Functionally, an essential GTPase which binds GTP, GDP and possibly (p)ppGpp with moderate affinity, with high nucleotide exchange rates and a fairly low GTP hydrolysis rate. Plays a role in control of the cell cycle, stress response, ribosome biogenesis and in those bacteria that undergo differentiation, in morphogenesis control. This Burkholderia lata (strain ATCC 17760 / DSM 23089 / LMG 22485 / NCIMB 9086 / R18194 / 383) protein is GTPase Obg.